A 125-amino-acid chain; its full sequence is Large ribosomal subunit protein bL12 (125 aa).

It belongs to the bacterial ribosomal protein bL12 family. In terms of assembly, homodimer. Part of the ribosomal stalk of the 50S ribosomal subunit. Forms a multimeric L10(L12)X complex, where L10 forms an elongated spine to which 2 to 4 L12 dimers bind in a sequential fashion. Binds GTP-bound translation factors.

Its function is as follows. Forms part of the ribosomal stalk which helps the ribosome interact with GTP-bound translation factors. Is thus essential for accurate translation. This Methylibium petroleiphilum (strain ATCC BAA-1232 / LMG 22953 / PM1) protein is Large ribosomal subunit protein bL12.